The primary structure comprises 513 residues: 2-isopropylmalate synthase (513 aa).

In terms of domain architecture, Pyruvate carboxyltransferase spans 5–267 (LVIFDTTLRD…ETRIDTTQIV (263 aa)). The Mn(2+) site is built by aspartate 14, histidine 202, histidine 204, and asparagine 238. The segment at 393 to 513 (KLVYSRVCSE…LDKVKAQGGV (121 aa)) is regulatory domain.

The protein belongs to the alpha-IPM synthase/homocitrate synthase family. LeuA type 1 subfamily. In terms of assembly, homodimer. Mn(2+) serves as cofactor.

The protein localises to the cytoplasm. It carries out the reaction 3-methyl-2-oxobutanoate + acetyl-CoA + H2O = (2S)-2-isopropylmalate + CoA + H(+). The protein operates within amino-acid biosynthesis; L-leucine biosynthesis; L-leucine from 3-methyl-2-oxobutanoate: step 1/4. Functionally, catalyzes the condensation of the acetyl group of acetyl-CoA with 3-methyl-2-oxobutanoate (2-ketoisovalerate) to form 3-carboxy-3-hydroxy-4-methylpentanoate (2-isopropylmalate). The protein is 2-isopropylmalate synthase of Dechloromonas aromatica (strain RCB).